A 276-amino-acid polypeptide reads, in one-letter code: 1-(5-phosphoribosyl)-5-[(5-phosphoribosylamino)methylideneamino] imidazole-4-carboxamide isomerase (276 aa).

This sequence belongs to the HisA/HisF family.

It is found in the cytoplasm. It carries out the reaction 1-(5-phospho-beta-D-ribosyl)-5-[(5-phospho-beta-D-ribosylamino)methylideneamino]imidazole-4-carboxamide = 5-[(5-phospho-1-deoxy-D-ribulos-1-ylimino)methylamino]-1-(5-phospho-beta-D-ribosyl)imidazole-4-carboxamide. It participates in amino-acid biosynthesis; L-histidine biosynthesis; L-histidine from 5-phospho-alpha-D-ribose 1-diphosphate: step 4/9. The protein is 1-(5-phosphoribosyl)-5-[(5-phosphoribosylamino)methylideneamino] imidazole-4-carboxamide isomerase (HIS6) of Debaryomyces hansenii (strain ATCC 36239 / CBS 767 / BCRC 21394 / JCM 1990 / NBRC 0083 / IGC 2968) (Yeast).